A 353-amino-acid polypeptide reads, in one-letter code: uncharacterized protein (353 aa).

Residues 233-245 are compositionally biased toward polar residues; the sequence is ASCSNNEPSASLE. The segment at 233-265 is disordered; that stretch reads ASCSNNEPSASLESESRHFSPVNSLSPSSLSTD. Residues 252–263 show a composition bias toward low complexity; sequence SPVNSLSPSSLS.

This is an uncharacterized protein from Saccharomyces cerevisiae (strain ATCC 204508 / S288c) (Baker's yeast).